We begin with the raw amino-acid sequence, 60 residues long: Large ribosomal subunit protein bL32 (60 aa).

The span at 1-19 (MAVPKRRTSKRRKRARNTH) shows a compositional bias: basic residues. The tract at residues 1–20 (MAVPKRRTSKRRKRARNTHK) is disordered.

It belongs to the bacterial ribosomal protein bL32 family.

The protein is Large ribosomal subunit protein bL32 of Gemmatimonas aurantiaca (strain DSM 14586 / JCM 11422 / NBRC 100505 / T-27).